The following is a 461-amino-acid chain: Pyruvate kinase (461 aa).

Arginine 46 is a binding site for substrate. K(+) is bound by residues asparagine 48 and aspartate 80. Residue 48-51 (NLAH) coordinates ATP. Positions 87 and 165 each coordinate ATP. Glutamate 232 is a binding site for Mg(2+). Glycine 255, aspartate 256, and threonine 288 together coordinate substrate. Residue aspartate 256 participates in Mg(2+) binding.

Belongs to the pyruvate kinase family. In terms of assembly, homotetramer. Requires a divalent metal cation as cofactor.

The enzyme catalyses pyruvate + ATP = phosphoenolpyruvate + ADP + H(+). It functions in the pathway carbohydrate degradation; glycolysis; pyruvate from D-glyceraldehyde 3-phosphate: step 5/5. Its activity is regulated as follows. Not activated by classical allosteric effectors. This chain is Pyruvate kinase (pyk), found in Pyrobaculum aerophilum (strain ATCC 51768 / DSM 7523 / JCM 9630 / CIP 104966 / NBRC 100827 / IM2).